We begin with the raw amino-acid sequence, 905 residues long: Alanine--tRNA ligase (905 aa).

4 residues coordinate Zn(2+): H582, H586, C687, and H691.

It belongs to the class-II aminoacyl-tRNA synthetase family. Requires Zn(2+) as cofactor.

The protein localises to the cytoplasm. The catalysed reaction is tRNA(Ala) + L-alanine + ATP = L-alanyl-tRNA(Ala) + AMP + diphosphate. Its function is as follows. Catalyzes the attachment of alanine to tRNA(Ala) in a two-step reaction: alanine is first activated by ATP to form Ala-AMP and then transferred to the acceptor end of tRNA(Ala). Also edits incorrectly charged Ser-tRNA(Ala) and Gly-tRNA(Ala) via its editing domain. This chain is Alanine--tRNA ligase, found in Mycoplasma mobile (strain ATCC 43663 / 163K / NCTC 11711) (Mesomycoplasma mobile).